Here is a 241-residue protein sequence, read N- to C-terminus: Adenosylcobinamide-GDP ribazoletransferase (241 aa).

4 helical membrane-spanning segments follow: residues L34 to F54, V108 to I128, L184 to L206, and F220 to P240.

It belongs to the CobS family. Mg(2+) serves as cofactor.

The protein resides in the cell membrane. The enzyme catalyses alpha-ribazole + adenosylcob(III)inamide-GDP = adenosylcob(III)alamin + GMP + H(+). It carries out the reaction alpha-ribazole 5'-phosphate + adenosylcob(III)inamide-GDP = adenosylcob(III)alamin 5'-phosphate + GMP + H(+). It participates in cofactor biosynthesis; adenosylcobalamin biosynthesis; adenosylcobalamin from cob(II)yrinate a,c-diamide: step 7/7. Functionally, joins adenosylcobinamide-GDP and alpha-ribazole to generate adenosylcobalamin (Ado-cobalamin). Also synthesizes adenosylcobalamin 5'-phosphate from adenosylcobinamide-GDP and alpha-ribazole 5'-phosphate. The protein is Adenosylcobinamide-GDP ribazoletransferase of Methanopyrus kandleri (strain AV19 / DSM 6324 / JCM 9639 / NBRC 100938).